A 294-amino-acid chain; its full sequence is N-acetylmuramic acid 6-phosphate etherase (294 aa).

The SIS domain occupies 54–217 (VIQSFEEEGR…STASMIGVGK (164 aa)). The active-site Proton donor is Glu82. Glu113 is a catalytic residue.

This sequence belongs to the GCKR-like family. MurNAc-6-P etherase subfamily. Homodimer.

It carries out the reaction N-acetyl-D-muramate 6-phosphate + H2O = N-acetyl-D-glucosamine 6-phosphate + (R)-lactate. It participates in amino-sugar metabolism; N-acetylmuramate degradation. Specifically catalyzes the cleavage of the D-lactyl ether substituent of MurNAc 6-phosphate, producing GlcNAc 6-phosphate and D-lactate. The protein is N-acetylmuramic acid 6-phosphate etherase of Bacillus cereus (strain AH820).